The following is a 117-amino-acid chain: G antigen 4 (117 aa).

The segment at 1–117 is disordered; it reads MSWRGRSTYY…PEEGEKQSQC (117 aa). Acidic residues-rich tracts occupy residues 32–45 and 87–96; these read FSDE…EEGE and ECEDGPDGQE. The span at 103 to 117 shows a compositional bias: basic and acidic residues; the sequence is EEVKTPEEGEKQSQC.

The protein belongs to the GAGE family. In terms of tissue distribution, expressed in a variety of tumor tissues but not in normal tissues, except testis.

Antigen, recognized on melanoma by autologous cytolytic T-lymphocytes. The polypeptide is G antigen 4 (Homo sapiens (Human)).